A 424-amino-acid chain; its full sequence is Serine--tRNA ligase (424 aa).

Residue 231 to 233 (TAE) coordinates L-serine. 262-264 (RAE) lines the ATP pocket. An L-serine-binding site is contributed by E285. Position 349–352 (349–352 (EISS)) interacts with ATP. S385 contacts L-serine.

The protein belongs to the class-II aminoacyl-tRNA synthetase family. Type-1 seryl-tRNA synthetase subfamily. As to quaternary structure, homodimer. The tRNA molecule binds across the dimer.

Its subcellular location is the cytoplasm. It carries out the reaction tRNA(Ser) + L-serine + ATP = L-seryl-tRNA(Ser) + AMP + diphosphate + H(+). The catalysed reaction is tRNA(Sec) + L-serine + ATP = L-seryl-tRNA(Sec) + AMP + diphosphate + H(+). The protein operates within aminoacyl-tRNA biosynthesis; selenocysteinyl-tRNA(Sec) biosynthesis; L-seryl-tRNA(Sec) from L-serine and tRNA(Sec): step 1/1. Its function is as follows. Catalyzes the attachment of serine to tRNA(Ser). Is also able to aminoacylate tRNA(Sec) with serine, to form the misacylated tRNA L-seryl-tRNA(Sec), which will be further converted into selenocysteinyl-tRNA(Sec). This Geobacillus thermodenitrificans (strain NG80-2) protein is Serine--tRNA ligase.